The sequence spans 125 residues: Subtelomeric hrmA-associated cluster protein cgnA (125 aa).

G-Q-I/R/S repeat units follow at residues 11-13, 14-16, 17-19, 20-22, 23-25, 26-28, 29-31, 32-34, 35-37, 38-40, 41-43, 44-46, 47-49, 50-52, 53-55, 56-58, 59-61, 62-64, 65-67, 68-70, 71-73, 74-76, and 77-79; these read GQI, GPI, GQR, GQS, and GQA. A 23 X 3 AA approximate tandem repeats of G-Q-I/R/S region spans residues 11–79; sequence GQIGPIGQRG…IGQIGQIGQA (69 aa). A disordered region spans residues 15–57; that stretch reads PIGQRGQSGQRGQSGQRGQSGQIGQSGQSGQSGQSGQSGQIGQ.

It localises to the secreted. Functionally, hypoxia responsive morphology factor that modulates the expression of the subtelomeric hrmA-associated cluster (HAC) containing genes that alter the hyphal surface (such as reduced total chitin or increased beta-glucan exposure) and perturb inter-hyphal interactions within the developing biofilms, resulting in a loss of vertically aligned polarized growing filaments. Consequently, this hypoxia-typic morphotype (called H-MORPH) with altered biofilm architecture leads to increased hypoxia fitness, increased host inflammation, rapid disease progression, and mortality in a murine model of invasive aspergillosis. GcnA is directly involved in the reduction total surface chitin and the increase beta-glucan exposure, and mediates the detachment of the extracellular matrix and especially of its component galactosaminogalactan (GAG). This chain is Subtelomeric hrmA-associated cluster protein cgnA, found in Aspergillus fumigatus (strain CBS 144.89 / FGSC A1163 / CEA10) (Neosartorya fumigata).